A 366-amino-acid polypeptide reads, in one-letter code: UDP-GlcNAc:ribostamycin N-acetylglucosaminyltransferase (366 aa).

A compositionally biased stretch (low complexity) spans 342-352; it reads AAGAGPAVPAG. Residues 342 to 366 form a disordered region; the sequence is AAGAGPAVPAGAGEGRGGREEEHGG. Over residues 357 to 366 the composition is skewed to basic and acidic residues; it reads RGGREEEHGG.

It belongs to the glycosyltransferase group 1 family. Glycosyltransferase 4 subfamily. The cofactor is a divalent metal cation.

The enzyme catalyses ribostamycin + UDP-N-acetyl-alpha-D-glucosamine = 2'''-acetyl-6'''-hydroxyneomycin C + UDP + H(+). It participates in antibiotic biosynthesis; neomycin biosynthesis. Its function is as follows. Glycosyltransferase involved in the biosynthesis of neomycin by mediating glycosylation of ribostamycin with UDP-GlcNAc as a sugar donor to generate 2'''-acetyl-6'''-hydroxyneomycin C. This Streptomyces fradiae (Streptomyces roseoflavus) protein is UDP-GlcNAc:ribostamycin N-acetylglucosaminyltransferase (neoK).